The primary structure comprises 796 residues: Protocadherin beta-3 (796 aa).

Positions 1–26 (MEAGGERFLRQRQVLLLFVFLGGSLA) are cleaved as a signal peptide. At 27–690 (GSESRRYSVA…AQADLLTVYL (664 aa)) the chain is on the extracellular side. Cadherin domains follow at residues 35–133 (VAEE…SPVF), 138–242 (MHLK…APEF), 247–347 (YEVA…PPEL), 352–451 (VNSP…APAF), and 456–561 (YTLF…SPFV). The N-linked (GlcNAc...) asparagine glycan is linked to asparagine 169. 2 N-linked (GlcNAc...) asparagine glycosylation sites follow: asparagine 418 and asparagine 436. A glycan (N-linked (GlcNAc...) asparagine) is linked at asparagine 567. The 104-residue stretch at 568–671 (GSAPCTELVP…LVDGFSQPYL (104 aa)) folds into the Cadherin 6 domain. A helical transmembrane segment spans residues 691–711 (VVALASVSSLFLFSVLLFVAV). Residues 712 to 796 (RLCRRSRAAS…PSFRKSFEFS (85 aa)) lie on the Cytoplasmic side of the membrane.

Its subcellular location is the cell membrane. In terms of biological role, potential calcium-dependent cell-adhesion protein. May be involved in the establishment and maintenance of specific neuronal connections in the brain. The sequence is that of Protocadherin beta-3 (PCDHB3) from Pan troglodytes (Chimpanzee).